We begin with the raw amino-acid sequence, 493 residues long: Proline--tRNA ligase (493 aa).

The protein belongs to the class-II aminoacyl-tRNA synthetase family. ProS type 3 subfamily. Homodimer.

The protein localises to the cytoplasm. The catalysed reaction is tRNA(Pro) + L-proline + ATP = L-prolyl-tRNA(Pro) + AMP + diphosphate. Catalyzes the attachment of proline to tRNA(Pro) in a two-step reaction: proline is first activated by ATP to form Pro-AMP and then transferred to the acceptor end of tRNA(Pro). The sequence is that of Proline--tRNA ligase from Porphyromonas gingivalis (strain ATCC BAA-308 / W83).